We begin with the raw amino-acid sequence, 163 residues long: Phosphopantetheine adenylyltransferase (163 aa).

Residue threonine 9 participates in substrate binding. Residues threonine 9–phenylalanine 10 and histidine 17 each bind ATP. Residues lysine 41, leucine 76, and arginine 90 each contribute to the substrate site. ATP is bound by residues glycine 91 to arginine 93, glutamate 101, and tyrosine 126 to threonine 132.

The protein belongs to the bacterial CoaD family. As to quaternary structure, homohexamer. Requires Mg(2+) as cofactor.

The protein resides in the cytoplasm. It carries out the reaction (R)-4'-phosphopantetheine + ATP + H(+) = 3'-dephospho-CoA + diphosphate. It functions in the pathway cofactor biosynthesis; coenzyme A biosynthesis; CoA from (R)-pantothenate: step 4/5. Reversibly transfers an adenylyl group from ATP to 4'-phosphopantetheine, yielding dephospho-CoA (dPCoA) and pyrophosphate. The polypeptide is Phosphopantetheine adenylyltransferase (Dichelobacter nodosus (strain VCS1703A)).